Here is a 494-residue protein sequence, read N- to C-terminus: MSEANHKNIVVVGAGIIGTSVATMLSKVSPNWHIDMFERLEGAGIESSNENNNAGTGHAALCELNYTVEQDDGSIDASKAQEINEQFELSRQFWGNLVKNGDISNPEEFIQPLPHISFVMGPTNVNFLRKRYETLRTLPMFDTIEYTEDMETMRKWMPLMMENREPGHQMAASKIDEGTDVNYGALTRKLAHYLEQKSNVSLKYNHDVVDLTQREDGKWEVVVENRETKEKVTKIADKVFIGAGGHSIPLLQKSGVKQREHLGGFPISGQFLRCTNPDIIKQHAAKVYSKEPQGKPPMTVPHLDTRYINGKQTLLFGPYANIGPKFLKFGSNLDLFESIKPYNITTMLASAVKNVPLIKYSIDQMIKTKEGCMNYLRTFIPDAKDEDWELYTAGKRVQVIKDSEQHGKGFVVFGTEVVNSDDNSMIALLGESPGASTSLSVVLEVLEKNFADDKEAWEPVVKEMVPTYGRSLINDEKLMRETRRETSKNLHLNR.

The protein belongs to the MQO family. Requires FAD as cofactor.

It carries out the reaction (S)-malate + a quinone = a quinol + oxaloacetate. Its pathway is carbohydrate metabolism; tricarboxylic acid cycle; oxaloacetate from (S)-malate (quinone route): step 1/1. This is Probable malate:quinone oxidoreductase 3 from Staphylococcus epidermidis (strain ATCC 35984 / DSM 28319 / BCRC 17069 / CCUG 31568 / BM 3577 / RP62A).